We begin with the raw amino-acid sequence, 313 residues long: MSGEASTSRRKRQRVPSSVESVENGGGDAVARSGTLFELDLLDCPICCHALTSPIFQCDNGHIACSSCCTKLRNKCPSCALPIGNFRSRIMERVVEAVMVTCPNVKHGCTEKFSYGKELIHEKDCRFALCYCPAPNCNYSGVYKDLYSHFYVNHYDTWNQIGCGNFAGAWLRISEKILVLQYGQGPLIAVQCFKETQGMYVTVNCIAPCAPGVGELSFELSYKMPMGGNSTMMFKSEEMNRIQKVSFQTPEKDFMLVPYYFLGDFSTLKMEICIRKLKKDEEEADEDEESEEEEDDDDDDDDDDEEEDADEEE.

The segment at 1-26 (MSGEASTSRRKRQRVPSSVESVENGG) is disordered. An RING-type zinc finger spans residues 44–80 (CPICCHALTSPIFQCDNGHIACSSCCTKLRNKCPSCA). The SBD stretch occupies residues 94–277 (VVEAVMVTCP…LKMEICIRKL (184 aa)). The SIAH-type zinc-finger motif lies at 97 to 155 (AVMVTCPNVKHGCTEKFSYGKELIHEKDCRFALCYCPAPNCNYSGVYKDLYSHFYVNHY). The Zn(2+) site is built by Cys-102, Cys-109, His-121, Cys-125, Cys-132, Cys-137, His-149, and His-154. Residues 278 to 313 (KKDEEEADEDEESEEEEDDDDDDDDDDEEEDADEEE) are disordered. Over residues 282-313 (EEADEDEESEEEEDDDDDDDDDDEEEDADEEE) the composition is skewed to acidic residues.

It belongs to the SINA (Seven in absentia) family.

The catalysed reaction is S-ubiquitinyl-[E2 ubiquitin-conjugating enzyme]-L-cysteine + [acceptor protein]-L-lysine = [E2 ubiquitin-conjugating enzyme]-L-cysteine + N(6)-ubiquitinyl-[acceptor protein]-L-lysine.. It participates in protein modification; protein ubiquitination. E3 ubiquitin-protein ligase that mediates ubiquitination and subsequent proteasomal degradation of target proteins. E3 ubiquitin ligases accept ubiquitin from an E2 ubiquitin-conjugating enzyme in the form of a thioester and then directly transfers the ubiquitin to targeted substrates. It probably triggers the ubiquitin-mediated degradation of different substrates. The sequence is that of E3 ubiquitin-protein ligase SINA-like 2 from Arabidopsis thaliana (Mouse-ear cress).